A 330-amino-acid polypeptide reads, in one-letter code: MKKSFIHQQEEISFVKNTFTQYLIAKLDVVEVQGPILSRVGDGMQDNLSGVENPVSVHVLNIPNATFEVVHSLAKWKRHTLARFGFNEGEGLVVNMKALRPDEDSLDQTHSVYVDQWDWEKVIPDGQRNLAYLKETVETIYKVIRLTELAVEARYDIEAVLPKKITFIHTEELVARYPDLTPKERENAITKEFGAVFLIGIGGVLPDGKPHDGRAPDYDDWTSESENGYHGLNGDILVWNEQLGTAFELSSMGIRVDEEALKRQVDITGDQERLQFDWHKSLLNGLFPLTIGGGIGQSRMAMFLLRKKHIGEVQTSVWPQEVRDTYDNIL.

The protein belongs to the class-II aminoacyl-tRNA synthetase family. AsnA subfamily.

The protein resides in the cytoplasm. It carries out the reaction L-aspartate + NH4(+) + ATP = L-asparagine + AMP + diphosphate + H(+). It functions in the pathway amino-acid biosynthesis; L-asparagine biosynthesis; L-asparagine from L-aspartate (ammonia route): step 1/1. The protein is Aspartate--ammonia ligase of Streptococcus equi subsp. zooepidemicus (strain H70).